The chain runs to 257 residues: Ribonuclease HII (257 aa).

The RNase H type-2 domain maps to 71 to 257 (ELIAGIDEVG…EPIKSMVNFK (187 aa)). Residues Asp-77, Glu-78, and Asp-169 each contribute to the a divalent metal cation site.

It belongs to the RNase HII family. The cofactor is Mn(2+). Requires Mg(2+) as cofactor.

It localises to the cytoplasm. It carries out the reaction Endonucleolytic cleavage to 5'-phosphomonoester.. Functionally, endonuclease that specifically degrades the RNA of RNA-DNA hybrids. The chain is Ribonuclease HII (rnhB) from Lactococcus lactis subsp. cremoris (strain MG1363).